Reading from the N-terminus, the 57-residue chain is Potassium channel toxin alpha-KTx 23.3 (57 aa).

Positions 1-23 (MKMSIVIILLLFTCLIATNGASG) are cleaved as a signal peptide. 4 cysteine pairs are disulfide-bonded: Cys-26–Cys-46, Cys-32–Cys-51, Cys-36–Cys-53, and Cys-41–Cys-56.

It belongs to the short scorpion toxin superfamily. Potassium channel inhibitor family. Alpha-KTx 23 subfamily. As to expression, expressed by the venom gland.

It localises to the secreted. Functionally, this toxin shows both immunosuppressive and anti-inflammatory activities. It has the potential to inhibit human T cell activation, since it reduces IL-2 secretion and the expression of T cell activation marker CD69 and acts as an anti-inflammatory agent, since it provokes the reduction of secretion of both IFN-gamma and TNF-alpha. In vivo, the delayed-type hypersensitivity response in rat autoimmune disease model is ameliorated in the presence of this toxin. Acts by blocking Kv1.3/KCNA3 potassium channels of T-lymphocytes. This is Potassium channel toxin alpha-KTx 23.3 from Scorpiops tibetanus (Scorpion).